The chain runs to 254 residues: 3-deoxy-manno-octulosonate cytidylyltransferase (254 aa).

The protein belongs to the KdsB family.

Its subcellular location is the cytoplasm. It carries out the reaction 3-deoxy-alpha-D-manno-oct-2-ulosonate + CTP = CMP-3-deoxy-beta-D-manno-octulosonate + diphosphate. It functions in the pathway nucleotide-sugar biosynthesis; CMP-3-deoxy-D-manno-octulosonate biosynthesis; CMP-3-deoxy-D-manno-octulosonate from 3-deoxy-D-manno-octulosonate and CTP: step 1/1. The protein operates within bacterial outer membrane biogenesis; lipopolysaccharide biosynthesis. Activates KDO (a required 8-carbon sugar) for incorporation into bacterial lipopolysaccharide in Gram-negative bacteria. The protein is 3-deoxy-manno-octulosonate cytidylyltransferase of Bordetella pertussis (strain Tohama I / ATCC BAA-589 / NCTC 13251).